Consider the following 158-residue polypeptide: Acireductone dioxygenase (158 aa).

Residues His81, His83, Glu87, and His126 each coordinate Fe(2+). His81, His83, Glu87, and His126 together coordinate Ni(2+).

The protein belongs to the acireductone dioxygenase (ARD) family. It depends on Fe(2+) as a cofactor. Ni(2+) serves as cofactor.

Its subcellular location is the cytoplasm. The protein resides in the nucleus. It carries out the reaction 1,2-dihydroxy-5-(methylsulfanyl)pent-1-en-3-one + O2 = 4-methylsulfanyl-2-oxobutanoate + formate + 2 H(+). It catalyses the reaction 1,2-dihydroxy-5-(methylsulfanyl)pent-1-en-3-one + O2 = 3-(methylsulfanyl)propanoate + CO + formate + 2 H(+). Its pathway is amino-acid biosynthesis; L-methionine biosynthesis via salvage pathway; L-methionine from S-methyl-5-thio-alpha-D-ribose 1-phosphate: step 5/6. Functionally, catalyzes 2 different reactions between oxygen and the acireductone 1,2-dihydroxy-3-keto-5-methylthiopentene (DHK-MTPene) depending upon the metal bound in the active site. Fe-containing acireductone dioxygenase (Fe-ARD) produces formate and 2-keto-4-methylthiobutyrate (KMTB), the alpha-ketoacid precursor of methionine in the methionine recycle pathway. Ni-containing acireductone dioxygenase (Ni-ARD) produces methylthiopropionate, carbon monoxide and formate, and does not lie on the methionine recycle pathway. The polypeptide is Acireductone dioxygenase (Metarhizium robertsii (strain ARSEF 23 / ATCC MYA-3075) (Metarhizium anisopliae (strain ARSEF 23))).